The sequence spans 207 residues: Cytochrome c biogenesis ATP-binding export protein CcmA (207 aa).

The ABC transporter domain occupies 4–207; the sequence is LEARELLCER…RISLTQTRAA (204 aa). 36 to 43 serves as a coordination point for ATP; that stretch reads GSNGAGKT.

The protein belongs to the ABC transporter superfamily. CcmA exporter (TC 3.A.1.107) family. As to quaternary structure, the complex is composed of two ATP-binding proteins (CcmA) and two transmembrane proteins (CcmB).

The protein localises to the cell inner membrane. The catalysed reaction is heme b(in) + ATP + H2O = heme b(out) + ADP + phosphate + H(+). In terms of biological role, part of the ABC transporter complex CcmAB involved in the biogenesis of c-type cytochromes; once thought to export heme, this seems not to be the case, but its exact role is uncertain. Responsible for energy coupling to the transport system. The chain is Cytochrome c biogenesis ATP-binding export protein CcmA from Shigella boydii serotype 4 (strain Sb227).